Consider the following 294-residue polypeptide: Ribosomal RNA small subunit methyltransferase I (294 aa).

This sequence belongs to the methyltransferase superfamily. RsmI family.

It localises to the cytoplasm. The catalysed reaction is cytidine(1402) in 16S rRNA + S-adenosyl-L-methionine = 2'-O-methylcytidine(1402) in 16S rRNA + S-adenosyl-L-homocysteine + H(+). Catalyzes the 2'-O-methylation of the ribose of cytidine 1402 (C1402) in 16S rRNA. This is Ribosomal RNA small subunit methyltransferase I from Mesorhizobium japonicum (strain LMG 29417 / CECT 9101 / MAFF 303099) (Mesorhizobium loti (strain MAFF 303099)).